A 339-amino-acid chain; its full sequence is Serine/threonine-protein kinase pdik1l-A (339 aa).

In terms of domain architecture, Protein kinase spans tyrosine 8–phenylalanine 332. ATP-binding positions include valine 14–valine 22 and lysine 37. Aspartate 164 serves as the catalytic Proton acceptor.

It belongs to the protein kinase superfamily. Ser/Thr protein kinase family.

The protein resides in the nucleus. It catalyses the reaction L-seryl-[protein] + ATP = O-phospho-L-seryl-[protein] + ADP + H(+). The enzyme catalyses L-threonyl-[protein] + ATP = O-phospho-L-threonyl-[protein] + ADP + H(+). The protein is Serine/threonine-protein kinase pdik1l-A (pdik1-a) of Xenopus laevis (African clawed frog).